A 702-amino-acid chain; its full sequence is Polyribonucleotide nucleotidyltransferase (702 aa).

Residues Asp-485 and Asp-491 each contribute to the Mg(2+) site. One can recognise a KH domain in the interval 552–611 (PRITTLKINPEKIRDVIGKGGATIRALTEETGTTIELEDDGTVKIASANGEATKEAIRRI). Residues 621–689 (GTVYNGKVVR…RQGRVRLSMK (69 aa)) enclose the S1 motif domain.

It belongs to the polyribonucleotide nucleotidyltransferase family. In terms of assembly, component of the RNA degradosome, which is a multiprotein complex involved in RNA processing and mRNA degradation. The cofactor is Mg(2+).

It is found in the cytoplasm. It catalyses the reaction RNA(n+1) + phosphate = RNA(n) + a ribonucleoside 5'-diphosphate. In terms of biological role, involved in mRNA degradation. Catalyzes the phosphorolysis of single-stranded polyribonucleotides processively in the 3'- to 5'-direction. In Shewanella woodyi (strain ATCC 51908 / MS32), this protein is Polyribonucleotide nucleotidyltransferase.